A 294-amino-acid polypeptide reads, in one-letter code: Cytidine deaminase (294 aa).

2 consecutive CMP/dCMP-type deaminase domains span residues 48-168 (NDDE…FGPK) and 187-294 (DNTS…RVTL). Residue 89–91 (NME) coordinates substrate. Histidine 102 provides a ligand contact to Zn(2+). Glutamate 104 acts as the Proton donor in catalysis. Zn(2+)-binding residues include cysteine 129 and cysteine 132.

Belongs to the cytidine and deoxycytidylate deaminase family. As to quaternary structure, homodimer. The cofactor is Zn(2+).

The catalysed reaction is cytidine + H2O + H(+) = uridine + NH4(+). It catalyses the reaction 2'-deoxycytidine + H2O + H(+) = 2'-deoxyuridine + NH4(+). Its function is as follows. This enzyme scavenges exogenous and endogenous cytidine and 2'-deoxycytidine for UMP synthesis. This chain is Cytidine deaminase, found in Proteus mirabilis (strain HI4320).